A 1013-amino-acid polypeptide reads, in one-letter code: Zinc finger and BTB domain-containing protein 4 (1013 aa).

Residues Cys-30–Gly-152 enclose the BTB domain. Lys-40 is covalently cross-linked (Glycyl lysine isopeptide (Lys-Gly) (interchain with G-Cter in SUMO2)). Over residues Leu-67–Ser-110 the composition is skewed to low complexity. Disordered regions lie at residues Leu-67–Arg-124 and Asp-183–Gln-221. Residues Ser-111–Ser-121 show a composition bias toward pro residues. Residues Val-186 to Leu-348 form an interaction with CBFA2T3 region. The segment at Leu-234–Cys-256 adopts a C2H2-type 1; atypical zinc-finger fold. Residues Arg-257–Val-281 form a disordered region. The span at Thr-266–Ala-279 shows a compositional bias: gly residues. 3 C2H2-type zinc fingers span residues Tyr-309–His-331, Tyr-337–His-359, and Tyr-365–His-388. A Phosphoserine modification is found at Ser-391. 4 disordered regions span residues Lys-428–Phe-765, His-783–Ile-852, Gly-883–Gly-904, and Val-972–Gly-1013. The segment covering Ala-453–Ser-470 has biased composition (pro residues). 2 stretches are compositionally biased toward low complexity: residues Thr-496–Ser-506 and Ala-531–Thr-554. Lys-573 is covalently cross-linked (Glycyl lysine isopeptide (Lys-Gly) (interchain with G-Cter in SUMO2)). The segment covering Gly-576–Arg-590 has biased composition (gly residues). The segment covering Ile-608–Pro-625 has biased composition (basic and acidic residues). Lys-615 participates in a covalent cross-link: Glycyl lysine isopeptide (Lys-Gly) (interchain with G-Cter in SUMO2). Positions Glu-627–Leu-663 form a coiled coil. Residues Ser-629–Glu-654 are compositionally biased toward acidic residues. Over residues Ala-678 to Leu-689 the composition is skewed to gly residues. C2H2-type zinc fingers lie at residues His-726–His-748 and Phe-765–His-787. Phosphothreonine; by HIPK2 occurs at positions 795 and 797. A compositionally biased stretch (low complexity) spans Thr-836–Ser-846. Residues Gly-883–Gly-902 are compositionally biased toward gly residues. A compositionally biased stretch (pro residues) spans Ala-976–Pro-995. Thr-983 is modified (phosphothreonine; by HIPK2). Positions Gly-997–Gly-1013 are enriched in basic and acidic residues.

In terms of assembly, interacts with HIPK2. Interacts with CBFA2T3. Interacts with ZBTB38. In terms of processing, phosphorylated by HIPK2. This phosphorylation reduces stability and triggers ZBTB4 protein degradation in response to DNA damage.

The protein localises to the nucleus. It is found in the chromosome. In terms of biological role, transcriptional repressor with bimodal DNA-binding specificity. Represses transcription in a methyl-CpG-dependent manner. Binds with a higher affinity to methylated CpG dinucleotides in the consensus sequence 5'-CGCG-3' but can also bind to the non-methylated consensus sequence 5'-CTGCNA-3' also known as the consensus kaiso binding site (KBS). Can also bind specifically to a single methyl-CpG pair and can bind hemimethylated DNA but with a lower affinity compared to methylated DNA. Plays a role in postnatal myogenesis, may be involved in the regulation of satellite cells self-renewal. The chain is Zinc finger and BTB domain-containing protein 4 (ZBTB4) from Homo sapiens (Human).